Here is a 101-residue protein sequence, read N- to C-terminus: Small ribosomal subunit protein uS14 (101 aa).

The protein belongs to the universal ribosomal protein uS14 family. As to quaternary structure, part of the 30S ribosomal subunit. Contacts proteins S3 and S10.

In terms of biological role, binds 16S rRNA, required for the assembly of 30S particles and may also be responsible for determining the conformation of the 16S rRNA at the A site. This Burkholderia mallei (strain NCTC 10247) protein is Small ribosomal subunit protein uS14.